The following is a 359-amino-acid chain: Peptide chain release factor 1 (359 aa).

Gln236 bears the N5-methylglutamine mark.

This sequence belongs to the prokaryotic/mitochondrial release factor family. In terms of processing, methylated by PrmC. Methylation increases the termination efficiency of RF1.

The protein resides in the cytoplasm. Peptide chain release factor 1 directs the termination of translation in response to the peptide chain termination codons UAG and UAA. The polypeptide is Peptide chain release factor 1 (Streptococcus pneumoniae (strain Hungary19A-6)).